A 157-amino-acid chain; its full sequence is DNA gyrase inhibitor (157 aa).

It belongs to the DNA gyrase inhibitor family. In terms of assembly, interacts with DNA gyrase.

It is found in the cytoplasm. Its function is as follows. Inhibits the supercoiling activity of DNA gyrase. Acts by inhibiting DNA gyrase at an early step, prior to (or at the step of) binding of DNA by the gyrase. It protects cells against toxins that target DNA gyrase, by inhibiting activity of these toxins and reducing the formation of lethal double-strand breaks in the cell. This chain is DNA gyrase inhibitor, found in Citrobacter rodentium (strain ICC168) (Citrobacter freundii biotype 4280).